The primary structure comprises 620 residues: Threonine--tRNA ligase (620 aa).

In terms of domain architecture, TGS spans 1-42 (MFEIAKGISNSLAKKSVGAKVDGKNVDMSYILDHDAEVEFID). A catalytic region spans residues 224–515 (DHRKLGKELE…LIEHYAGAFP (292 aa)). Zn(2+) contacts are provided by Cys315, His366, and His492.

This sequence belongs to the class-II aminoacyl-tRNA synthetase family. Homodimer. Requires Zn(2+) as cofactor.

Its subcellular location is the cytoplasm. The catalysed reaction is tRNA(Thr) + L-threonine + ATP = L-threonyl-tRNA(Thr) + AMP + diphosphate + H(+). Its function is as follows. Catalyzes the attachment of threonine to tRNA(Thr) in a two-step reaction: L-threonine is first activated by ATP to form Thr-AMP and then transferred to the acceptor end of tRNA(Thr). Also edits incorrectly charged L-seryl-tRNA(Thr). This is Threonine--tRNA ligase from Fusobacterium nucleatum subsp. nucleatum (strain ATCC 25586 / DSM 15643 / BCRC 10681 / CIP 101130 / JCM 8532 / KCTC 2640 / LMG 13131 / VPI 4355).